We begin with the raw amino-acid sequence, 511 residues long: Glycerol kinase (511 aa).

Threonine 11 lines the ADP pocket. Threonine 11, serine 12, and serine 13 together coordinate ATP. Threonine 11 is a binding site for sn-glycerol 3-phosphate. Arginine 15 provides a ligand contact to ADP. Sn-glycerol 3-phosphate is bound by residues arginine 81, glutamate 82, tyrosine 133, and aspartate 242. Glycerol contacts are provided by arginine 81, glutamate 82, tyrosine 133, aspartate 242, and glutamine 243. Positions 264 and 321 each coordinate ADP. ATP contacts are provided by threonine 264, glycine 321, glutamine 325, and glycine 426. Glycine 426 and asparagine 430 together coordinate ADP.

This sequence belongs to the FGGY kinase family.

The catalysed reaction is glycerol + ATP = sn-glycerol 3-phosphate + ADP + H(+). It participates in polyol metabolism; glycerol degradation via glycerol kinase pathway; sn-glycerol 3-phosphate from glycerol: step 1/1. Inhibited by fructose 1,6-bisphosphate (FBP). In terms of biological role, key enzyme in the regulation of glycerol uptake and metabolism. Catalyzes the phosphorylation of glycerol to yield sn-glycerol 3-phosphate. The polypeptide is Glycerol kinase (Verminephrobacter eiseniae (strain EF01-2)).